A 651-amino-acid chain; its full sequence is DNA ligase (651 aa).

Residues 30 to 34, 79 to 80, and Glu105 contribute to the NAD(+) site; these read DEEYD and SM. The N6-AMP-lysine intermediate role is filled by Lys107. NAD(+) is bound by residues Arg128, Glu162, and Lys301. The Zn(2+) site is built by Cys395, Cys398, Cys411, and Cys416. The BRCT domain maps to 570–651; that stretch reads ALNENISNKT…NALLGGDDEV (82 aa).

Belongs to the NAD-dependent DNA ligase family. LigA subfamily. Requires Mg(2+) as cofactor. Mn(2+) serves as cofactor.

The catalysed reaction is NAD(+) + (deoxyribonucleotide)n-3'-hydroxyl + 5'-phospho-(deoxyribonucleotide)m = (deoxyribonucleotide)n+m + AMP + beta-nicotinamide D-nucleotide.. In terms of biological role, DNA ligase that catalyzes the formation of phosphodiester linkages between 5'-phosphoryl and 3'-hydroxyl groups in double-stranded DNA using NAD as a coenzyme and as the energy source for the reaction. It is essential for DNA replication and repair of damaged DNA. In Campylobacter lari (strain RM2100 / D67 / ATCC BAA-1060), this protein is DNA ligase.